Reading from the N-terminus, the 259-residue chain is 4-hydroxy-tetrahydrodipicolinate reductase (259 aa).

Residues 8 to 13 (GFAGAM), 94 to 96 (GTT), and 120 to 123 (APNF) contribute to the NAD(+) site. The Proton donor/acceptor role is filled by His150. His151 contacts (S)-2,3,4,5-tetrahydrodipicolinate. Lys154 (proton donor) is an active-site residue. (S)-2,3,4,5-tetrahydrodipicolinate is bound at residue 160–161 (GT).

The protein belongs to the DapB family.

The protein resides in the cytoplasm. It catalyses the reaction (S)-2,3,4,5-tetrahydrodipicolinate + NAD(+) + H2O = (2S,4S)-4-hydroxy-2,3,4,5-tetrahydrodipicolinate + NADH + H(+). The catalysed reaction is (S)-2,3,4,5-tetrahydrodipicolinate + NADP(+) + H2O = (2S,4S)-4-hydroxy-2,3,4,5-tetrahydrodipicolinate + NADPH + H(+). It functions in the pathway amino-acid biosynthesis; L-lysine biosynthesis via DAP pathway; (S)-tetrahydrodipicolinate from L-aspartate: step 4/4. Catalyzes the conversion of 4-hydroxy-tetrahydrodipicolinate (HTPA) to tetrahydrodipicolinate. This Limosilactobacillus fermentum (strain NBRC 3956 / LMG 18251) (Lactobacillus fermentum) protein is 4-hydroxy-tetrahydrodipicolinate reductase.